The following is a 428-amino-acid chain: D-alanine--D-alanine ligase (428 aa).

An ATP-grasp domain is found at 205 to 424; sequence KVVLDAAGIP…YTELITRLIE (220 aa). Residue 237–299 participates in ATP binding; the sequence is DAGLTYPLFV…EQGIDGREIE (63 aa). The Mg(2+) site is built by Asp378, Glu391, and Asn393.

This sequence belongs to the D-alanine--D-alanine ligase family. The cofactor is Mg(2+). Mn(2+) serves as cofactor.

The protein resides in the cytoplasm. The catalysed reaction is 2 D-alanine + ATP = D-alanyl-D-alanine + ADP + phosphate + H(+). It functions in the pathway cell wall biogenesis; peptidoglycan biosynthesis. In terms of biological role, cell wall formation. The chain is D-alanine--D-alanine ligase from Bifidobacterium longum (strain NCC 2705).